The primary structure comprises 144 residues: Neuritin-A (144 aa).

A signal peptide spans 1–27; it reads MGLKLSGRYIFLVLAVHLAYLLQAVKA. Ser114 carries the GPI-anchor amidated serine lipid modification. Residues 115 to 144 constitute a propeptide, removed in mature form; it reads AGAPGQRLLFPAFLPLLMVFLSTLFILVLQ.

It belongs to the neuritin family. As to expression, expressed in sensory regions of the brain including the visual, auditory and olfactory systems. Within the retina, only expressed in the retinal ganglion cells. Concentrated in axon tracts including retinal axons.

The protein localises to the cell membrane. Modulates postsynaptic dendritic arbor elaboration and synaptic maturation. The chain is Neuritin-A (nrn1-a) from Xenopus laevis (African clawed frog).